The primary structure comprises 149 residues: MTANFSTHVFSPQHCGCDRLTSIDDVRQCLTEYIYWSSYAYRNRQCAGQLYSTLLSFRDDAELVFIDIRELVKNMPWDDVKDCAEIIRCYIPDEQKTIREISAIIGLCAYAATYWGGEDHPTSNSLNALFVMLEMLNYVDYNIIFRRMN.

It belongs to the orthopoxvirus OPG200 family. Homodimers. Interacts with host IKBKB; this interaction inhibits host NF-kappa-B activation.

Functionally, contributes to virulence by binding to the host IKBKB subunit of the IKK complex and preventing host NF-kappa-B activation in response to pro-inflammatory stimuli such as TNF-alpha or IL1B. Mechanistically, sterically hinders the direct contact between the kinase domains of IKBKB in the IKK complex containing IKBKB, CHUK/IKKA and NEMO. The sequence is that of Protein OPG200 (OPG200) from Vaccinia virus (strain Western Reserve) (VACV).